The chain runs to 515 residues: Signal transduction histidine-protein kinase/phosphatase MprB (515 aa).

The Cytoplasmic portion of the chain corresponds to 1–24 (MTLPPPPSRLKPPRNTSSLSLRWR). Residues 25–45 (VMLLAMSMVAMVVVLMSVAVY) traverse the membrane as a helical segment. The Extracellular segment spans residues 46 to 165 (AVVSRALYDD…TGQVLGRLGT (120 aa)). Residues 166 to 186 (VLLIVGGVGVAVAAIAGGMVA) form a helical membrane-spanning segment. Residues 187 to 239 (RAGLRPVGRLTQAAERVARTDDLRPIPVFGSDELARLTEAFNMMLRALTESRE) form the HAMP domain. At 187–515 (RAGLRPVGRL…GKSRSASKEL (329 aa)) the chain is on the cytoplasmic side. The region spanning 247–467 (DAGHELRTPL…SFYVMLPGRP (221 aa)) is the Histidine kinase domain. The residue at position 250 (H250) is a Phosphohistidine; by autocatalysis. The segment at 468–515 (LTPGGNGTAPVPAAQFDPDMRSAGSRADRRVIKNTETNGKSRSASKEL) is disordered.

Mg(2+) serves as cofactor. Requires Mn(2+) as cofactor. In terms of processing, autophosphorylated.

The protein localises to the cell membrane. The catalysed reaction is ATP + protein L-histidine = ADP + protein N-phospho-L-histidine.. Its function is as follows. Member of the two-component regulatory system MprB/MprA which contributes to maintaining a balance among several systems involved in stress resistance and is required for establishment and maintenance of persistent infection in the host. In response to environmental signals MprB acts both as a membrane-associated protein kinase that undergoes autophosphorylation and subsequently transfers the phosphate to MprA, and a protein phosphatase that dephosphorylates phospho-MprA. The sequence is that of Signal transduction histidine-protein kinase/phosphatase MprB (mprB) from Mycobacterium sp. (strain KMS).